The primary structure comprises 92 residues: Acylphosphatase (92 aa).

Positions 3-90 (RVHVLVAGRV…GEFTEFAVLR (88 aa)) constitute an Acylphosphatase-like domain. Residues R18 and N36 contribute to the active site.

Belongs to the acylphosphatase family.

It catalyses the reaction an acyl phosphate + H2O = a carboxylate + phosphate + H(+). The protein is Acylphosphatase (acyP) of Methylococcus capsulatus (strain ATCC 33009 / NCIMB 11132 / Bath).